The primary structure comprises 214 residues: Cytochrome b (214 aa).

4 helical membrane-spanning segments follow: residues 31–51 (FGSM…FLAI), 75–96 (WTMQ…YIHI), 111–131 (WLSG…GYVL), and 176–196 (FFAL…AHIM). The heme b site is built by H81 and H95. Heme b contacts are provided by H180 and H194. A ubiquinone is bound at residue H199.

The protein belongs to the cytochrome b family. In terms of assembly, the cytochrome bc1 complex contains 3 respiratory subunits (MT-CYB, CYC1 and UQCRFS1), 2 core proteins (UQCRC1 and UQCRC2) and probably 6 low-molecular weight proteins. Heme b is required as a cofactor.

The protein resides in the mitochondrion inner membrane. In terms of biological role, component of the ubiquinol-cytochrome c reductase complex (complex III or cytochrome b-c1 complex) that is part of the mitochondrial respiratory chain. The b-c1 complex mediates electron transfer from ubiquinol to cytochrome c. Contributes to the generation of a proton gradient across the mitochondrial membrane that is then used for ATP synthesis. The polypeptide is Cytochrome b (MT-CYB) (Elapsoidea semiannulata (Angolan garter snake)).